The following is a 252-amino-acid chain: Carbonic anhydrase (252 aa).

The first 26 residues, 1–26, serve as a signal peptide directing secretion; it reads MPRFPRTLPRLTAVLLLACTAFSAAA. Positions 31–252 constitute an Alpha-carbonic anhydrase domain; it reads THWGYTGHDS…QPLNARVVIE (222 aa). A disulfide bridge links C54 with C207. Catalysis depends on H92, which acts as the Proton acceptor. Residues H118, H120, and H137 each contribute to the Zn(2+) site. 203-204 contacts substrate; that stretch reads TT.

It belongs to the alpha-carbonic anhydrase family. In terms of assembly, homodimer. The cofactor is Zn(2+).

It is found in the periplasm. It carries out the reaction hydrogencarbonate + H(+) = CO2 + H2O. Functionally, reversible hydration of carbon dioxide. The polypeptide is Carbonic anhydrase (cah) (Neisseria gonorrhoeae).